A 253-amino-acid chain; its full sequence is Imidazole glycerol phosphate synthase subunit HisF (253 aa).

Active-site residues include D11 and D130.

This sequence belongs to the HisA/HisF family. Heterodimer of HisH and HisF.

The protein localises to the cytoplasm. It catalyses the reaction 5-[(5-phospho-1-deoxy-D-ribulos-1-ylimino)methylamino]-1-(5-phospho-beta-D-ribosyl)imidazole-4-carboxamide + L-glutamine = D-erythro-1-(imidazol-4-yl)glycerol 3-phosphate + 5-amino-1-(5-phospho-beta-D-ribosyl)imidazole-4-carboxamide + L-glutamate + H(+). The protein operates within amino-acid biosynthesis; L-histidine biosynthesis; L-histidine from 5-phospho-alpha-D-ribose 1-diphosphate: step 5/9. IGPS catalyzes the conversion of PRFAR and glutamine to IGP, AICAR and glutamate. The HisF subunit catalyzes the cyclization activity that produces IGP and AICAR from PRFAR using the ammonia provided by the HisH subunit. This Clostridium botulinum (strain 657 / Type Ba4) protein is Imidazole glycerol phosphate synthase subunit HisF.